We begin with the raw amino-acid sequence, 222 residues long: 2-hydroxy-3-keto-5-methylthiopentenyl-1-phosphate phosphatase (222 aa).

Belongs to the HAD-like hydrolase superfamily. MtnX family.

The enzyme catalyses 2-hydroxy-5-methylsulfanyl-3-oxopent-1-enyl phosphate + H2O = 1,2-dihydroxy-5-(methylsulfanyl)pent-1-en-3-one + phosphate. It functions in the pathway amino-acid biosynthesis; L-methionine biosynthesis via salvage pathway; L-methionine from S-methyl-5-thio-alpha-D-ribose 1-phosphate: step 4/6. Its function is as follows. Dephosphorylates 2-hydroxy-3-keto-5-methylthiopentenyl-1-phosphate (HK-MTPenyl-1-P) yielding 1,2-dihydroxy-3-keto-5-methylthiopentene (DHK-MTPene). This chain is 2-hydroxy-3-keto-5-methylthiopentenyl-1-phosphate phosphatase, found in Brevibacillus brevis (strain 47 / JCM 6285 / NBRC 100599).